The primary structure comprises 287 residues: ATP synthase gamma chain (287 aa).

This sequence belongs to the ATPase gamma chain family. In terms of assembly, F-type ATPases have 2 components, CF(1) - the catalytic core - and CF(0) - the membrane proton channel. CF(1) has five subunits: alpha(3), beta(3), gamma(1), delta(1), epsilon(1). CF(0) has three main subunits: a, b and c.

The protein resides in the cell inner membrane. Functionally, produces ATP from ADP in the presence of a proton gradient across the membrane. The gamma chain is believed to be important in regulating ATPase activity and the flow of protons through the CF(0) complex. In Escherichia fergusonii (strain ATCC 35469 / DSM 13698 / CCUG 18766 / IAM 14443 / JCM 21226 / LMG 7866 / NBRC 102419 / NCTC 12128 / CDC 0568-73), this protein is ATP synthase gamma chain.